Here is an 80-residue protein sequence, read N- to C-terminus: Putative membrane protein insertion efficiency factor (80 aa).

It belongs to the UPF0161 family.

It is found in the cell inner membrane. Functionally, could be involved in insertion of integral membrane proteins into the membrane. The chain is Putative membrane protein insertion efficiency factor from Picosynechococcus sp. (strain ATCC 27264 / PCC 7002 / PR-6) (Agmenellum quadruplicatum).